A 127-amino-acid polypeptide reads, in one-letter code: Riboflavin kinase (127 aa).

Position 10–15 (10–15) interacts with CDP; the sequence is GLGEGK. Threonine 39 and asparagine 41 together coordinate Mg(2+). FMN contacts are provided by threonine 96 and glutamate 104. 109–112 lines the CDP pocket; sequence IQLR.

It belongs to the archaeal riboflavin kinase family. Requires Mg(2+) as cofactor.

It carries out the reaction riboflavin + CTP = CDP + FMN + H(+). It functions in the pathway cofactor biosynthesis; FMN biosynthesis; FMN from riboflavin (CTP route): step 1/1. Functionally, catalyzes the CTP-dependent phosphorylation of riboflavin (vitamin B2) to form flavin mononucleotide (FMN). In Methanococcus maripaludis (strain DSM 14266 / JCM 13030 / NBRC 101832 / S2 / LL), this protein is Riboflavin kinase.